The chain runs to 333 residues: DNA repair and recombination protein RadA (333 aa).

Position 127–134 (127–134 (GEFGSGKT)) interacts with ATP.

Belongs to the eukaryotic RecA-like protein family.

In terms of biological role, involved in DNA repair and in homologous recombination. Binds and assemble on single-stranded DNA to form a nucleoprotein filament. Hydrolyzes ATP in a ssDNA-dependent manner and promotes DNA strand exchange between homologous DNA molecules. In Pyrobaculum arsenaticum (strain DSM 13514 / JCM 11321 / PZ6), this protein is DNA repair and recombination protein RadA.